The sequence spans 925 residues: Protein PDC2 (925 aa).

In terms of domain architecture, HTH CENPB-type spans 63–138 (DANRLRKPNN…LSKMDVNISV (76 aa)). Disordered stretches follow at residues 510–596 (DNNQ…RNSS), 674–693 (NEKA…SSTA), and 904–925 (PTGG…TGFF). Positions 513–537 (QNHLSMSQASHNPDYNSNHSNNAIE) are enriched in polar residues. Positions 538-563 (NTNNRGSNNNNNNNGSSNNINDNDSS) are enriched in low complexity. Residues 565-596 (KYLQQNTVDNSTKTGNPGQPNISSMESQRNSS) are compositionally biased toward polar residues. Residues 674-686 (NEKAASDQNKSTD) show a composition bias toward basic and acidic residues. Polar residues predominate over residues 904–916 (PTGGSNLPDSNNL).

Functionally, essential for the synthesis of pyruvate decarboxylase. May be important for a high basal level of PDC gene expression or play a positive role in the autoregulation control of PDC1 and PDC5. In Saccharomyces cerevisiae (strain ATCC 204508 / S288c) (Baker's yeast), this protein is Protein PDC2 (PDC2).